A 108-amino-acid polypeptide reads, in one-letter code: MRDMMSMMKKAKEIQEKMQQIQEEMTNLQMIGTAGGGLINVTLNGKNTITAIKIDPSLLKPEESEILEDLIMAAHNDAKTKIEIAMEEKTKSMTAGLPLPSGFKFPFS.

This sequence belongs to the YbaB/EbfC family. As to quaternary structure, homodimer.

The protein resides in the cytoplasm. It is found in the nucleoid. Its function is as follows. Binds to DNA and alters its conformation. May be involved in regulation of gene expression, nucleoid organization and DNA protection. The protein is Nucleoid-associated protein BQ02190 of Bartonella quintana (strain Toulouse) (Rochalimaea quintana).